The following is a 901-amino-acid chain: Protein translocase subunit SecA (901 aa).

Residues Gln-87, 105–109 (GEGKT), and Asp-512 each bind ATP. The interval 859–901 (HQDDDSAAAAALAAQTGERKVGRNDPCPCGSGKKYKQCHGRLQ) is disordered. Residues Cys-885, Cys-887, Cys-896, and His-897 each coordinate Zn(2+). The segment covering 891–901 (KKYKQCHGRLQ) has biased composition (basic residues).

It belongs to the SecA family. Monomer and homodimer. Part of the essential Sec protein translocation apparatus which comprises SecA, SecYEG and auxiliary proteins SecDF-YajC and YidC. Requires Zn(2+) as cofactor.

Its subcellular location is the cell inner membrane. The protein resides in the cytoplasm. The catalysed reaction is ATP + H2O + cellular proteinSide 1 = ADP + phosphate + cellular proteinSide 2.. In terms of biological role, part of the Sec protein translocase complex. Interacts with the SecYEG preprotein conducting channel. Has a central role in coupling the hydrolysis of ATP to the transfer of proteins into and across the cell membrane, serving both as a receptor for the preprotein-SecB complex and as an ATP-driven molecular motor driving the stepwise translocation of polypeptide chains across the membrane. The chain is Protein translocase subunit SecA from Escherichia coli O127:H6 (strain E2348/69 / EPEC).